Consider the following 33-residue polypeptide: Brevinin-2LT (33 aa).

A disulfide bond links Cys27 and Cys33.

Expressed by the skin glands.

The protein resides in the secreted. Its function is as follows. Has antibacterial activity. The chain is Brevinin-2LT from Rana latastei (Italian agile frog).